Consider the following 188-residue polypeptide: Peptidyl-tRNA hydrolase (188 aa).

Residue Phe15 participates in tRNA binding. His20 functions as the Proton acceptor in the catalytic mechanism. TRNA is bound by residues Tyr64, Asn66, and Asn112.

It belongs to the PTH family. As to quaternary structure, monomer.

It localises to the cytoplasm. It catalyses the reaction an N-acyl-L-alpha-aminoacyl-tRNA + H2O = an N-acyl-L-amino acid + a tRNA + H(+). In terms of biological role, hydrolyzes ribosome-free peptidyl-tRNAs (with 1 or more amino acids incorporated), which drop off the ribosome during protein synthesis, or as a result of ribosome stalling. Functionally, catalyzes the release of premature peptidyl moieties from peptidyl-tRNA molecules trapped in stalled 50S ribosomal subunits, and thus maintains levels of free tRNAs and 50S ribosomes. This Borrelia turicatae (strain 91E135) protein is Peptidyl-tRNA hydrolase.